Here is a 485-residue protein sequence, read N- to C-terminus: MLSASRKLNNQQFLKTIRNMTTFRSEFDTFGEVKVNDEKYWGAQTQRSLENFDIGGESEKMPLMVVRSFGILKRCAAIVNKKYGLDATIADNIAKAATEVVEGKLDDQFPLVVFQTGSGTQSNMNANEVISNRAIELMTGKRDFSKKLVHPNDHVNKSQSSNDTFPTCMHIAAAISINEKLVPALEMLLAAMRTKQNEFNHIIKIGRTHLQDATPLTLGQEFSGYCTQIEYGIQRIKDTLPRLYNLAQGGTAVGTGLNTPVGFDVDIASEVAKFTGLPFKTAPNKFEALAAHDAMVEVSGALNTVAVSLMKIANDIRFLGSGPRCGLGELILPENEPGSSIMPGKVNPTQCEAMTMVCAQVMGNNTTVSIAGSNGHFELNVFKPVIIKNVLSSIRLIADASVSFTKHCVVGIKADEKRIDQLLHESLMLVTALNPYIGYDKAAKAAKKAHKEKTTLKEACLSLGFTTSEEFDKWVDPSKMIGSMK.

A mitochondrion-targeting transit peptide spans 1–19; sequence MLSASRKLNNQQFLKTIRN. Substrate contacts are provided by residues 118-120, 150-153, 160-162, and Thr-208; these read SGT, HPND, and SSN. Residue His-209 is the Proton donor/acceptor of the active site. Residue Ser-339 is part of the active site. Substrate contacts are provided by residues Ser-340 and 345-347; that span reads KVN.

The protein belongs to the class-II fumarase/aspartase family. Fumarase subfamily. In terms of assembly, homotetramer.

It localises to the mitochondrion. The protein resides in the cytoplasm. It carries out the reaction (S)-malate = fumarate + H2O. Its pathway is carbohydrate metabolism; tricarboxylic acid cycle; (S)-malate from fumarate: step 1/1. In terms of biological role, catalyzes the reversible stereospecific interconversion of fumarate to L-malate. Functionally, catalyzes the hydration of fumarate to L-malate in the tricarboxylic acid (TCA) cycle to facilitate a transition step in the production of energy in the form of NADH. The protein is Fumarate hydratase, mitochondrial of Dictyostelium discoideum (Social amoeba).